A 108-amino-acid chain; its full sequence is MTDTPVEESLFQIIHCFHQYAARQGDMETLSLQELQALLMDNMPRFMDSLGRKEPYYITELFQAADKNKDNQICFDEFLYILGKLVKDYHLQYHRQLCARYCAQHSLY.

In terms of domain architecture, EF-hand spans 53 to 88 (KEPYYITELFQAADKNKDNQICFDEFLYILGKLVKD). Aspartate 66, asparagine 68, aspartate 70, glutamine 72, and glutamate 77 together coordinate Ca(2+).

It belongs to the S-100 family.

The protein is Protein S100-A15A (S100A15A) of Pongo abelii (Sumatran orangutan).